A 53-amino-acid chain; its full sequence is Small ribosomal subunit protein uS14 (53 aa).

Zn(2+)-binding residues include cysteine 17, cysteine 20, cysteine 36, and cysteine 39.

Belongs to the universal ribosomal protein uS14 family. Zinc-binding uS14 subfamily. Part of the 30S ribosomal subunit. Zn(2+) is required as a cofactor.

Functionally, binds 16S rRNA, required for the assembly of 30S particles. This Methanocaldococcus jannaschii (strain ATCC 43067 / DSM 2661 / JAL-1 / JCM 10045 / NBRC 100440) (Methanococcus jannaschii) protein is Small ribosomal subunit protein uS14.